A 230-amino-acid chain; its full sequence is MEKIRVKEIFDNVYSVDFGDGLKRIATKSLVPGKRVYGEKLVYSDSIEYRIWNPNKSKLGAAIINGLKKMPIKKGEKVLYLGASAGTTPSHVADIAENSLVYALEFAPRIMREFIDSCNERKNLIPVLGDANRPQDYSNIVEKVDVIFEDVAQPNQAEILVKNAKWFLKENGYAMISIKARSVDVTKNPREIFAEQKKILIEGGFEIVDEVNIEPFEKDHMMMVGIWKGN.

S-adenosyl-L-methionine is bound by residues 87 to 88 (TT), 105 to 106 (EF), 130 to 131 (DA), and 150 to 153 (DVAQ).

Belongs to the methyltransferase superfamily. Fibrillarin family. In terms of assembly, interacts with nop5. Component of box C/D small ribonucleoprotein (sRNP) particles that contain rpl7ae, FlpA and nop5, plus a guide RNA.

Functionally, involved in pre-rRNA and tRNA processing. Utilizes the methyl donor S-adenosyl-L-methionine to catalyze the site-specific 2'-hydroxyl methylation of ribose moieties in rRNA and tRNA. Site specificity is provided by a guide RNA that base pairs with the substrate. Methylation occurs at a characteristic distance from the sequence involved in base pairing with the guide RNA. This is Fibrillarin-like rRNA/tRNA 2'-O-methyltransferase from Methanococcus maripaludis (strain DSM 14266 / JCM 13030 / NBRC 101832 / S2 / LL).